The primary structure comprises 179 residues: MARLKEIYRKEIAPKLKEELKLSNVMEVPRVTKITLNMGLGEAIGDKKVIEHAVADLEKITGQKVVVTYARKSIAGFKVREGWPIGVKVTLRRDRMYEFLDRLLSISLPRVRDFRGLNAKSFDGRGNYSMGVKEQIIFPEIDYDKIDALRGLDITLTTTAKNDDEGRALLRAFKFPFRN.

Belongs to the universal ribosomal protein uL5 family. In terms of assembly, part of the 50S ribosomal subunit; part of the 5S rRNA/L5/L18/L25 subcomplex. Contacts the 5S rRNA and the P site tRNA. Forms a bridge to the 30S subunit in the 70S ribosome.

Its function is as follows. This is one of the proteins that bind and probably mediate the attachment of the 5S RNA into the large ribosomal subunit, where it forms part of the central protuberance. In the 70S ribosome it contacts protein S13 of the 30S subunit (bridge B1b), connecting the 2 subunits; this bridge is implicated in subunit movement. Contacts the P site tRNA; the 5S rRNA and some of its associated proteins might help stabilize positioning of ribosome-bound tRNAs. The sequence is that of Large ribosomal subunit protein uL5 from Pseudomonas savastanoi pv. phaseolicola (strain 1448A / Race 6) (Pseudomonas syringae pv. phaseolicola (strain 1448A / Race 6)).